A 1216-amino-acid polypeptide reads, in one-letter code: RAB11-binding protein RELCH (1216 aa).

Disordered stretches follow at residues 1 to 73 and 135 to 177; these read MAAM…GLPG and GNFE…QLNR. Ala-2 carries the N-acetylalanine modification. Ser-20 and Ser-22 each carry phosphoserine. Residues 21–31 show a composition bias toward acidic residues; the sequence is DSDEDDDEVAA. Thr-32 bears the Phosphothreonine mark. Residues Ser-54 and Ser-56 each carry the phosphoserine modification. Residues 148–163 show a composition bias toward gly residues; sequence GAPGVPGAAGVGGAGG. Residues Ser-180 and Ser-182 each carry the phosphoserine modification. A Phosphothreonine modification is found at Thr-183. Ser-186 bears the Phosphoserine mark. Residues 197 to 231 are a coiled coil; it reads NRETDEKVAVLEFELRKAKETIQALRANLTKAAEH. Residues 255-287 enclose the LisH domain; the sequence is EKRALNFLVNEFLLKNNYKLTSITFSDENDDQD. Residues 359–397 are a coiled coil; sequence VQKLEDKISLLNSEKWSLMEQIRRLKSEMDFLKNEHFAI. Position 385 is a phosphoserine (Ser-385). The tract at residues 401–477 is disordered; it reads CDSVQPPLDQ…SSLSSKKTVH (77 aa). Residues 411–435 show a composition bias toward basic and acidic residues; the sequence is LPHKDSEDSGQHPDVNSSDKGKNTD. Ser-453 bears the Phosphoserine mark. The interaction with RAB11A and RAB11B stretch occupies residues 497-779; that stretch reads CRMSADSRLG…SSKAKLHGEV (283 aa). 2 HEAT repeats span residues 601 to 639 and 640 to 679; these read LLPQ…RSSL and VLSM…KYHQ. Residue Ser-792 is modified to Phosphoserine. One copy of the HEAT 3 repeat lies at 1004–1042; that stretch reads VAPALVTLSSDPEFSVRIATIPAFGTIMETVIQRELLER. Ser-1149 carries the post-translational modification Phosphoserine.

It is found in the recycling endosome. Its subcellular location is the golgi apparatus. It localises to the trans-Golgi network. Its function is as follows. Regulates intracellular cholesterol distribution from recycling endosomes to the trans-Golgi network through interactions with RAB11 and OSBP. Functions in membrane tethering and promotes OSBP-mediated cholesterol transfer between RAB11-bound recycling endosomes and OSBP-bound Golgi-like membranes. This chain is RAB11-binding protein RELCH, found in Homo sapiens (Human).